Here is a 366-residue protein sequence, read N- to C-terminus: Mitogen-activated protein kinase 13 (366 aa).

The region spanning 25–308 (YVSLTHIGSG…ASQALAHPFF (284 aa)) is the Protein kinase domain. 31–39 (IGSGAYGSV) contacts ATP. At S47 the chain carries Phosphoserine. K54 serves as a coordination point for ATP. The active-site Proton acceptor is D150. Position 180 is a phosphothreonine; by MAP2K3, MAP2K4, MAP2K6 and MAP2K7 (T180). Positions 180 to 182 (TGY) match the TXY motif. Phosphotyrosine; by MAP2K3, MAP2K4, MAP2K6 and MAP2K7 is present on Y182. Position 350 is a phosphoserine (S350).

It belongs to the protein kinase superfamily. CMGC Ser/Thr protein kinase family. MAP kinase subfamily. Interacts with MAPK8IP2. Mg(2+) serves as cofactor. Post-translationally, dually phosphorylated on Thr-180 and Tyr-182 by MAP2K3/MKK3, MAP2K4/MKK4, MAP2K6/MKK6 and MAP2K7/MKK7, which activates the enzyme. Dephosphorylated by dual specificity phosphatase DUSP1.

It carries out the reaction L-seryl-[protein] + ATP = O-phospho-L-seryl-[protein] + ADP + H(+). The enzyme catalyses L-threonyl-[protein] + ATP = O-phospho-L-threonyl-[protein] + ADP + H(+). Its activity is regulated as follows. Activated by phosphorylation on threonine and tyrosine by dual specificity kinases, MAP2K3/MKK3 MAP2K6/MKK6, MAP2K4/MKK4 and MAP2K7/MKK7. Activation by ultraviolet radiation, hyperosmotic shock, anisomycin or by TNF-alpha is mediated by MAP2K3/MKK3. Inhibited by dual specificity phosphatase DUSP1. Serine/threonine kinase which acts as an essential component of the MAP kinase signal transduction pathway. MAPK13 is one of the four p38 MAPKs which play an important role in the cascades of cellular responses evoked by extracellular stimuli such as pro-inflammatory cytokines or physical stress leading to direct activation of transcription factors such as ELK1 and ATF2. Accordingly, p38 MAPKs phosphorylate a broad range of proteins and it has been estimated that they may have approximately 200 to 300 substrates each. MAPK13 is one of the less studied p38 MAPK isoforms. Some of the targets are downstream kinases such as MAPKAPK2, which are activated through phosphorylation and further phosphorylate additional targets. Plays a role in the regulation of protein translation by phosphorylating and inactivating EEF2K. Involved in cytoskeletal remodeling through phosphorylation of MAPT and STMN1. Mediates UV irradiation induced up-regulation of the gene expression of CXCL14. Plays an important role in the regulation of epidermal keratinocyte differentiation, apoptosis and skin tumor development. Phosphorylates the transcriptional activator MYB in response to stress which leads to rapid MYB degradation via a proteasome-dependent pathway. MAPK13 also phosphorylates and down-regulates PRKD1 during regulation of insulin secretion in pancreatic beta cells. The chain is Mitogen-activated protein kinase 13 (MAPK13) from Bos taurus (Bovine).